A 401-amino-acid polypeptide reads, in one-letter code: Acetate kinase (401 aa).

Position 9 (N9) interacts with Mg(2+). An ATP-binding site is contributed by K16. A substrate-binding site is contributed by R88. D147 acts as the Proton donor/acceptor in catalysis. ATP contacts are provided by residues 207 to 211 (HLGNG), 282 to 284 (DCR), and 333 to 337 (GIGEN). E388 contacts Mg(2+).

It belongs to the acetokinase family. As to quaternary structure, homodimer. Mg(2+) serves as cofactor. It depends on Mn(2+) as a cofactor.

It is found in the cytoplasm. It catalyses the reaction acetate + ATP = acetyl phosphate + ADP. It participates in metabolic intermediate biosynthesis; acetyl-CoA biosynthesis; acetyl-CoA from acetate: step 1/2. Catalyzes the formation of acetyl phosphate from acetate and ATP. Can also catalyze the reverse reaction. This chain is Acetate kinase, found in Haemophilus influenzae (strain ATCC 51907 / DSM 11121 / KW20 / Rd).